The primary structure comprises 110 residues: MDKSKRLFVKSKQSIRRSSPLIQSGDRIDYKNLSLLFKFISRQGKILSRRVNKLTLKQQRLITIAIKQARILSLLPFVNSSSFVNNAKKKYEKRKSITRTRTPVLKKKKK.

The protein belongs to the bacterial ribosomal protein bS18 family. Part of the 30S ribosomal subunit.

It is found in the plastid. The protein localises to the chloroplast. The protein is Small ribosomal subunit protein bS18c (rps18) of Pisum sativum (Garden pea).